The chain runs to 961 residues: MLSGERKEGGSPRFGKLHLPVGLWINSPRKQLAKLGRRWPSAASVKSSSSDTGSRSSEPLPPPPPPPHVELRRVGAVKAAGGASGSRAKRISQLFRGSGAGGAGGPGTPGGAQRWASEKKLPELAAGVAPEPPLPTRAAVPPGVLKIFASGLASGANYKSVLATERSTARELVAEALERYGLTGGRGAGDSGCVDAYALCDALGRPAVGVGGGEWRAEHLRVLADAERPLLVQDLWRARPGWARRFELRGREEARRLEQEAFGAADADGTNAPSWRTQKNRSRAASGGAALASPGPGSGSGTPTGSGGKERSENLSLRRSVSELSLQGRRRRQQERRQQALSMAPGAADAQMVPTDPGDFDQLTQCLIQAPSNRPYFLLLQGYQDAQDFVVYVMTREQHVFGRGGPSSSRGGSPAPYVDTFLNAPDILPRHCTVRAGPEPPAMVRPSRGAPVTHNGCLLLREAELHPGDLLGLGEHFLFMYKDPRSGGSGPARPSWLPARPGAAPPGPGWAFSCRLCGRGLQERGEALAAYLDGREPVLRFRPREEEALLGEIVRAAASGAGDLPPLGPATLLALCVQHSARELELGHLPRLLGRLARLIKEAVWEKIKEIGDRQPENHPEGVPEVPLTPEAVSVELRPLILWMANTTELLSFVQEKVLEMEKEADQEGLSSDPQLCNDLELCDEALALLDEVIMCTFQQSVYYLTKTLYSTLPALLDSNPFTAGAELPGPGAELEAMPPGLRPTLGVFQAALELTSQCELHPDLVSQTFGYLFFFSNASLLNSLMERGQGRPFYQWSRAVQIRTNLDLVLDWLQGAGLGDIATEFFRKLSIAVNLLCVPRTSLLKASWSSLRTDYPTLTPAQLHHLLSHYQLGPGRGPPPAWDPPPAERDAVDTGDIFESFSSHPPLILPLGSSRLRLTGPVTDDALHRELRRLRRLLWDLEQQELPANHRHGPPVASTP.

Over residues 1–10 (MLSGERKEGG) the composition is skewed to basic and acidic residues. Disordered regions lie at residues 1-21 (MLSG…HLPV), 35-70 (LGRR…PHVE), and 96-116 (RGSG…QRWA). Positions 41 to 57 (SAASVKSSSSDTGSRSS) are enriched in low complexity. The segment covering 59-68 (PLPPPPPPPH) has biased composition (pro residues). Position 96 is an omega-N-methylarginine (R96). Residues 98–110 (SGAGGAGGPGTPG) show a composition bias toward gly residues. Positions 141–253 (PPGVLKIFAS…RRFELRGREE (113 aa)) constitute a Ras-associating domain. Positions 261-352 (AFGAADADGT…MAPGAADAQM (92 aa)) are disordered. S274 and S286 each carry phosphoserine. Over residues 284-295 (AASGGAALASPG) the composition is skewed to low complexity. Over residues 296 to 307 (PGSGSGTPTGSG) the composition is skewed to gly residues. The span at 314 to 327 (NLSLRRSVSELSLQ) shows a compositional bias: low complexity. 4 positions are modified to phosphoserine: S320, S322, S325, and S413. In terms of domain architecture, Dilute spans 594-895 (GRLARLIKEA…PPAERDAVDT (302 aa)).

In terms of assembly, interacts with Ras family members that have been activated by GTP binding. Interacts with HRAS, RAP1A, RAP2, RRAS, RAF1 and RRAS2. Interacts with MYH9 and ARHGAP29. Detected in kidney, heart, skeletal muscle, small intestine and lung.

It is found in the cytoplasm. Its subcellular location is the perinuclear region. The protein resides in the golgi apparatus. It localises to the golgi stack. In terms of biological role, required for the proper formation of vascular structures that develop via both vasculogenesis and angiogenesis. Acts as a critical and vascular-specific regulator of GTPase signaling, cell architecture, and adhesion, which is essential for endothelial cell morphogenesis and blood vessel tubulogenesis. Regulates the activity of Rho GTPases in part by recruiting ARHGAP29 and suppressing RhoA signaling and dampening ROCK and MYH9 activities in endothelial cells. May act as effector for Golgi-bound HRAS and other Ras-like proteins. May promote HRAS-mediated transformation. Negative regulator of amino acid starvation-induced autophagy. This chain is Ras-interacting protein 1 (Rasip1), found in Mus musculus (Mouse).